The sequence spans 311 residues: Probable manganese-dependent inorganic pyrophosphatase (311 aa).

His-9, Asp-13, Asp-15, Asp-77, His-99, and Asp-151 together coordinate Mn(2+).

The protein belongs to the PPase class C family. In terms of assembly, homodimer. It depends on Mn(2+) as a cofactor.

It is found in the cytoplasm. It carries out the reaction diphosphate + H2O = 2 phosphate + H(+). The sequence is that of Probable manganese-dependent inorganic pyrophosphatase (ppaC) from Streptococcus gordonii (strain Challis / ATCC 35105 / BCRC 15272 / CH1 / DL1 / V288).